Here is a 168-residue protein sequence, read N- to C-terminus: Phosphopantetheine adenylyltransferase (168 aa).

T9 is a substrate binding site. Residues 9–10 and H17 contribute to the ATP site; that span reads TF. Substrate is bound by residues K41, L73, and R87. ATP-binding positions include 88-90, E98, and 123-129; these read GLR and YQFISGT.

It belongs to the bacterial CoaD family. As to quaternary structure, homohexamer. Mg(2+) serves as cofactor.

The protein localises to the cytoplasm. It carries out the reaction (R)-4'-phosphopantetheine + ATP + H(+) = 3'-dephospho-CoA + diphosphate. It participates in cofactor biosynthesis; coenzyme A biosynthesis; CoA from (R)-pantothenate: step 4/5. Reversibly transfers an adenylyl group from ATP to 4'-phosphopantetheine, yielding dephospho-CoA (dPCoA) and pyrophosphate. The sequence is that of Phosphopantetheine adenylyltransferase from Ralstonia nicotianae (strain ATCC BAA-1114 / GMI1000) (Ralstonia solanacearum).